Here is a 68-residue protein sequence, read N- to C-terminus: UPF0434 protein BMA10229_A1047 (68 aa).

It belongs to the UPF0434 family.

The sequence is that of UPF0434 protein BMA10229_A1047 from Burkholderia mallei (strain NCTC 10229).